The following is a 310-amino-acid chain: Biotin synthase (310 aa).

In terms of domain architecture, Radical SAM core spans 34 to 262 (GRVQLCALVN…TAQIRLSAGR (229 aa)). 3 residues coordinate [4Fe-4S] cluster: Cys-49, Cys-53, and Cys-56. Residues Cys-93, Cys-125, Cys-185, and Arg-257 each contribute to the [2Fe-2S] cluster site.

This sequence belongs to the radical SAM superfamily. Biotin synthase family. In terms of assembly, homodimer. Requires [4Fe-4S] cluster as cofactor. It depends on [2Fe-2S] cluster as a cofactor.

The enzyme catalyses (4R,5S)-dethiobiotin + (sulfur carrier)-SH + 2 reduced [2Fe-2S]-[ferredoxin] + 2 S-adenosyl-L-methionine = (sulfur carrier)-H + biotin + 2 5'-deoxyadenosine + 2 L-methionine + 2 oxidized [2Fe-2S]-[ferredoxin]. Its pathway is cofactor biosynthesis; biotin biosynthesis; biotin from 7,8-diaminononanoate: step 2/2. Catalyzes the conversion of dethiobiotin (DTB) to biotin by the insertion of a sulfur atom into dethiobiotin via a radical-based mechanism. The sequence is that of Biotin synthase from Synechococcus sp. (strain JA-3-3Ab) (Cyanobacteria bacterium Yellowstone A-Prime).